A 136-amino-acid polypeptide reads, in one-letter code: Large ribosomal subunit protein uL16 (136 aa).

Belongs to the universal ribosomal protein uL16 family. In terms of assembly, part of the 50S ribosomal subunit.

Binds 23S rRNA and is also seen to make contacts with the A and possibly P site tRNAs. The polypeptide is Large ribosomal subunit protein uL16 (Rickettsia akari (strain Hartford)).